Here is a 193-residue protein sequence, read N- to C-terminus: Protein PATRONUS 1 (193 aa).

The DEN-box motif lies at Asp-14–Asn-16. The D-box motif lies at Arg-46–Leu-49.

In terms of assembly, interacts directly with the anaphase promoting complex/cyclosome (APC/C) through the CDC27B and CDC20-1 subunits. Expressed in somatic and reproductive tissues. Expressed in inflorescence, young buds, roots and basal portion of young leaves. Expressed in proliferating cells such as apical meristems of roots and shoots, expanding cotyledons and leaves, root vascular tissues, and in stomatal precursor cells.

It localises to the nucleus. It is found in the cytoplasm. In terms of biological role, required for the maintenance of centromeric cohesion during interkinesis, until meiosis II. Required for regular configuration and segregation of sister chromatids in meiosis II. Also required for centromere cohesion during meiosis I. Involved in spindle organization at the end of telophase I and in meiosis II. Required to prevent precocious release of pericentromeric cohesins during meiosis, but not for cohesion establishment and monopolar orientation of kinetochores at meiosis I. Involved also in somatic development. Regulates mitotic cell division and ploidy stability in somatic cell types. May be involved in the organization of microtubules dynamics. Involved in abiotic stresses and mono- or divalent ions tolerance and may play a role in maintaining meristematic activity under saline conditions. PANS1 and GIG1 are part of a network linking centromere cohesion and cell cycle progression through control of APC/C activity. Regulates the number of dividing cells in root meristem and is necessary for the anaphase onset control through an APC/C-mediated pathway. Involved in maintaining correct chromosome arm cohesion under stress conditions. This is Protein PATRONUS 1 from Arabidopsis thaliana (Mouse-ear cress).